Reading from the N-terminus, the 236-residue chain is 2,3,4,5-tetrahydropyridine-2,6-dicarboxylate N-acetyltransferase (236 aa).

The protein belongs to the transferase hexapeptide repeat family. DapH subfamily.

It catalyses the reaction (S)-2,3,4,5-tetrahydrodipicolinate + acetyl-CoA + H2O = L-2-acetamido-6-oxoheptanedioate + CoA. Its pathway is amino-acid biosynthesis; L-lysine biosynthesis via DAP pathway; LL-2,6-diaminopimelate from (S)-tetrahydrodipicolinate (acetylase route): step 1/3. In terms of biological role, catalyzes the transfer of an acetyl group from acetyl-CoA to tetrahydrodipicolinate. This is 2,3,4,5-tetrahydropyridine-2,6-dicarboxylate N-acetyltransferase from Geobacillus kaustophilus (strain HTA426).